We begin with the raw amino-acid sequence, 470 residues long: FLYWCH transcription factor 2 (470 aa).

The disordered stretch occupies residues 102 to 148; sequence SQLISEDTRPSASSSPSSTATAVSNSGQSNATSTSSSSTEPEYKPRN. The segment covering 111–140 has biased composition (low complexity); that stretch reads PSASSSPSSTATAVSNSGQSNATSTSSSST. The segment at 145–204 adopts an FLYWCH-type zinc-finger fold; it reads KPRNVREKVYADGYIMSFDKKSCCGTKEFWRCERKNDCNARMHSDINTREIVRKLHPHNH.

Functionally, probable transcription factor. May bind to the promoters of target genes, including micro-RNA genes, in order to repress expression, and acting redundantly with flh-1 and flh-3. The polypeptide is FLYWCH transcription factor 2 (Caenorhabditis elegans).